The following is a 432-amino-acid chain: MLTSTFNTTKSEEIFAAAQKLMPGGVNSPVRAFKSVGGNPIVFDRVEGAYVWDVDGNQYIDYVGSWGPAICGHAHPEVIKALHAALDKGTSFGAPCLLENVLAEMVIDGVPSIEMVRFVNSGTEACMAILRLMRAYTGREKIIKFEGCYHGHADMFLVKAGSGVATLGLPDSPGVPKSVTANTLTAPFNDLEAVKALFADHPDQIAGVILEPVVGNAGFIPPDGGFLAGLREITQEQGALLVFDEVMTGFRIAYGGAQEKFGVLPDLTTLGKIIGGGLPVGAYGGRREIMSLVAPAGPMYQAGTLSGNPLAMTAGIKTLELIRQTGTYEYLDQITAKLINGLLTIAREAGHQVCGGHISGMFGLFFTAGPVHNYEDAKKSDLAKFSAFHRGMLEQGVYLAPSQFEAGFTSLAHTEADIDRTLEAARVVLNQL.

Lys272 carries the N6-(pyridoxal phosphate)lysine modification.

This sequence belongs to the class-III pyridoxal-phosphate-dependent aminotransferase family. HemL subfamily. As to quaternary structure, homodimer. It depends on pyridoxal 5'-phosphate as a cofactor.

The protein resides in the cytoplasm. It catalyses the reaction (S)-4-amino-5-oxopentanoate = 5-aminolevulinate. Its pathway is porphyrin-containing compound metabolism; protoporphyrin-IX biosynthesis; 5-aminolevulinate from L-glutamyl-tRNA(Glu): step 2/2. The protein operates within porphyrin-containing compound metabolism; chlorophyll biosynthesis. The sequence is that of Glutamate-1-semialdehyde 2,1-aminomutase from Cyanothece sp. (strain PCC 7425 / ATCC 29141).